Here is a 458-residue protein sequence, read N- to C-terminus: Phosphoglucosamine mutase (458 aa).

The active-site Phosphoserine intermediate is S106. S106, D247, D249, and D251 together coordinate Mg(2+). The residue at position 106 (S106) is a Phosphoserine.

Belongs to the phosphohexose mutase family. Mg(2+) is required as a cofactor. Post-translationally, activated by phosphorylation.

The enzyme catalyses alpha-D-glucosamine 1-phosphate = D-glucosamine 6-phosphate. Catalyzes the conversion of glucosamine-6-phosphate to glucosamine-1-phosphate. The polypeptide is Phosphoglucosamine mutase (Chlamydia felis (strain Fe/C-56) (Chlamydophila felis)).